The following is a 648-amino-acid chain: Transketolase (648 aa).

Position 22 (His-22) interacts with substrate. Residues His-62 and 109–111 contribute to the thiamine diphosphate site; that span reads GPL. Asp-150 provides a ligand contact to Mg(2+). Gly-151 and Asn-180 together coordinate thiamine diphosphate. Residues Asn-180 and Val-182 each contribute to the Mg(2+) site. Substrate-binding residues include His-252, Arg-345, and Ser-372. His-252 is a binding site for thiamine diphosphate. The Proton donor role is filled by Glu-397. Thiamine diphosphate is bound at residue Phe-423. Substrate-binding residues include His-447, Asp-455, and Arg-506.

The protein belongs to the transketolase family. In terms of assembly, homodimer. The cofactor is Mg(2+). Requires Ca(2+) as cofactor. It depends on Mn(2+) as a cofactor. Co(2+) serves as cofactor. Thiamine diphosphate is required as a cofactor.

The enzyme catalyses D-sedoheptulose 7-phosphate + D-glyceraldehyde 3-phosphate = aldehydo-D-ribose 5-phosphate + D-xylulose 5-phosphate. Catalyzes the transfer of a two-carbon ketol group from a ketose donor to an aldose acceptor, via a covalent intermediate with the cofactor thiamine pyrophosphate. The sequence is that of Transketolase (tkt) from Mycoplasma genitalium (strain ATCC 33530 / DSM 19775 / NCTC 10195 / G37) (Mycoplasmoides genitalium).